Here is a 725-residue protein sequence, read N- to C-terminus: Dipeptidyl-peptidase 5 (725 aa).

An N-terminal signal peptide occupies residues 1-18; that stretch reads MGALRWLSIAATASTALA. Residues N75, N96, N153, N258, N383, and N453 are each glycosylated (N-linked (GlcNAc...) asparagine). S563 (charge relay system) is an active-site residue. N610 is a glycosylation site (N-linked (GlcNAc...) asparagine). Residues D646 and H678 each act as charge relay system in the active site.

This sequence belongs to the peptidase S9C family.

It localises to the secreted. The polypeptide is Dipeptidyl-peptidase 5 (Aspergillus oryzae (strain ATCC 42149 / RIB 40) (Yellow koji mold)).